The primary structure comprises 301 residues: UDP-N-acetylenolpyruvoylglucosamine reductase (301 aa).

The region spanning 30–194 is the FAD-binding PCMH-type domain; it reads VGGEADYLVF…LSVKFALAPG (165 aa). The active site involves Arg-173. The active-site Proton donor is Ser-223. The active site involves Glu-293.

It belongs to the MurB family. The cofactor is FAD.

It is found in the cytoplasm. It catalyses the reaction UDP-N-acetyl-alpha-D-muramate + NADP(+) = UDP-N-acetyl-3-O-(1-carboxyvinyl)-alpha-D-glucosamine + NADPH + H(+). Its pathway is cell wall biogenesis; peptidoglycan biosynthesis. Cell wall formation. This is UDP-N-acetylenolpyruvoylglucosamine reductase from Streptococcus pneumoniae (strain Hungary19A-6).